The primary structure comprises 403 residues: MNKINIKKVVLAYSGGLDTSIIVKWLQDTYRCEVVTFTADIGQGEEVELARTKAKAAGVKEVYIENLREEFVRDFVFPMFRANAIYEGEYLLGTSIARPLISKRLVEIAHQEDADAISHGATGKGNDQVRFELNAYALDADIQVIAPWREWDLSSRESLMDYAQKHGIEIDYKKQLKKSPYSMDANLLHISYEGGILEDPWAEPEEDMWRWTVSPENAPNKAEYVEITFKKGGIIAINGKTMSPASVMEDLNKRAGAHGIGRNDIVENRFVGMKSRGCYETPAGTVMLKAHRAMESLTLDQAAAHLKDELMPKYAEMVYNGFWFAPERKMLQAAIDNTQEIVNGIVRLKFYKGNVTVVGRQSKDSLFSEKIATFEDDEGAYNQKDAAGFIKLNALRLRLKALK.

Residues Ala12–Ser20 and Ala39 contribute to the ATP site. L-citrulline is bound by residues Tyr90 and Ser95. ATP is bound at residue Gly120. 3 residues coordinate L-aspartate: Thr122, Asn126, and Asp127. L-citrulline is bound at residue Asn126. Residues Arg130, Ser182, Ser191, Glu267, and Tyr279 each contribute to the L-citrulline site.

Belongs to the argininosuccinate synthase family. Type 1 subfamily. As to quaternary structure, homotetramer.

It localises to the cytoplasm. The catalysed reaction is L-citrulline + L-aspartate + ATP = 2-(N(omega)-L-arginino)succinate + AMP + diphosphate + H(+). Its pathway is amino-acid biosynthesis; L-arginine biosynthesis; L-arginine from L-ornithine and carbamoyl phosphate: step 2/3. The polypeptide is Argininosuccinate synthase (Ruthia magnifica subsp. Calyptogena magnifica).